We begin with the raw amino-acid sequence, 868 residues long: Metabotropic glutamate receptor 6 (868 aa).

Residues 1 to 20 (MARLLLALLAWLAQMSPVRA) form the signal peptide. The Extracellular segment spans residues 21 to 576 (AGSVRLAGGL…VVRLTWSSPW (556 aa)). Cys48 and Cys90 are joined by a disulfide. Residues Ser145, 166 to 168 (AST), and Tyr216 each bind L-glutamate. Intrachain disulfides connect Cys235/Cys527, Cys358/Cys374, Cys414/Cys421, Cys509/Cys528, Cys513/Cys531, Cys534/Cys546, and Cys549/Cys562. Asn287 carries an N-linked (GlcNAc...) asparagine glycan. L-glutamate is bound at residue Asp298. Lys391 provides a ligand contact to L-glutamate. 2 N-linked (GlcNAc...) asparagine glycosylation sites follow: Asn442 and Asn470. Asn558 is a glycosylation site (N-linked (GlcNAc...) asparagine). Residues 577–599 (AAPPLLLAVLGIMATTTVVGTFV) traverse the membrane as a helical segment. Topologically, residues 600 to 613 (RHNNTPIVRASGRE) are cytoplasmic. A helical membrane pass occupies residues 614-634 (LSYVLLTGIFLIYAVTFLMVA). The Extracellular segment spans residues 635–645 (EPGAAVCATRR). The chain crosses the membrane as a helical span at residues 646 to 664 (LFLGLGTTLSYSALLTKTN). At 665–688 (RIYRIFEQGKRSVTPPPFISPTSQ) the chain is on the cytoplasmic side. The helical transmembrane segment at 689-709 (LVITFSLTSLQVVGVIAWLGA) threads the bilayer. Topologically, residues 710–739 (QPPHSVIDYEEQRTVDPEQARGVLKCDMSD) are extracellular. The helical transmembrane segment at 740-761 (LSLIGCLGYSLLLMVTCTVYAI) threads the bilayer. Residues 762-774 (KARGVPETFNEAK) lie on the Cytoplasmic side of the membrane. Residues 775–797 (PIGFTMYTTCIVWLAFVPIFFGT) traverse the membrane as a helical segment. Topologically, residues 798–810 (AQSAEKIYIQTTT) are extracellular. A helical transmembrane segment spans residues 811 to 836 (LTVSLSLSASVSLGMLYVPKTYVILF). Residues 837–868 (HPEQNVQKRKRSLKTTSTVAAPPKGADTEDPK) are Cytoplasmic-facing. The segment at 845-868 (RKRSLKTTSTVAAPPKGADTEDPK) is disordered.

The protein belongs to the G-protein coupled receptor 3 family. As to quaternary structure, homodimer. Interacts with GPR179. Interacts with photoreceptor synaptic protein LRIT1 (via its N-terminal extracellular domain).

The protein resides in the cell membrane. Its subcellular location is the endoplasmic reticulum membrane. It is found in the golgi apparatus membrane. It localises to the cell projection. The protein localises to the dendrite. In terms of biological role, G-protein coupled receptor for glutamate. Ligand binding causes a conformation change that triggers signaling via guanine nucleotide-binding proteins (G proteins) and modulates the activity of down-stream effectors, such as adenylate cyclase. Signaling inhibits adenylate cyclase activity. Signaling stimulates TRPM1 channel activity and Ca(2+) uptake. Required for normal vision. In Oryctolagus cuniculus (Rabbit), this protein is Metabotropic glutamate receptor 6 (GRM6).